The sequence spans 365 residues: Chorismate synthase (365 aa).

NADP(+) is bound by residues Arg48 and Arg54. Residues 125-127 (RSS), 237-238 (NA), Gly277, 292-296 (KPTSS), and Arg318 each bind FMN.

The protein belongs to the chorismate synthase family. Homotetramer. FMNH2 is required as a cofactor.

It carries out the reaction 5-O-(1-carboxyvinyl)-3-phosphoshikimate = chorismate + phosphate. It functions in the pathway metabolic intermediate biosynthesis; chorismate biosynthesis; chorismate from D-erythrose 4-phosphate and phosphoenolpyruvate: step 7/7. Catalyzes the anti-1,4-elimination of the C-3 phosphate and the C-6 proR hydrogen from 5-enolpyruvylshikimate-3-phosphate (EPSP) to yield chorismate, which is the branch point compound that serves as the starting substrate for the three terminal pathways of aromatic amino acid biosynthesis. This reaction introduces a second double bond into the aromatic ring system. The protein is Chorismate synthase of Verminephrobacter eiseniae (strain EF01-2).